Consider the following 583-residue polypeptide: Pentatricopeptide repeat-containing protein At3g59040 (583 aa).

PPR repeat units follow at residues 138 to 172 (SEID…GSTP), 173 to 207 (NVIS…GPEP), 208 to 242 (SAIT…KKSP), 246 to 280 (DQKM…GVPQ), 281 to 312 (STVT…DIQP), 313 to 347 (DVVS…GVRP), 348 to 382 (THKA…RIFP), 383 to 417 (DLWS…GFEP), 418 to 452 (NIVT…GIKA), and 453 to 487 (NQTI…GVPP). Positions 525-583 (VYGSDDDEEGVEDISSESSDDEDEGDDDDDDARETVLYDKPQEGSLGYGSLQTEELVGL) are disordered. A compositionally biased stretch (acidic residues) spans 528–556 (SDDDEEGVEDISSESSDDEDEGDDDDDDA). Basic and acidic residues predominate over residues 557–566 (RETVLYDKPQ).

Belongs to the PPR family. P subfamily.

This is Pentatricopeptide repeat-containing protein At3g59040 from Arabidopsis thaliana (Mouse-ear cress).